We begin with the raw amino-acid sequence, 423 residues long: Acaloleptin A (423 aa).

The N-terminal stretch at 1–17 (MITKISLILFAVLLVSG) is a signal peptide. Residues 18-26 (LEEEERWKR) constitute a propeptide that is removed on maturation. 4 disordered regions span residues 28-58 (LQPG…NTKT), 108-128 (INNK…DNGN), 180-203 (NVNN…GNTR), and 355-385 (SDDE…TRAD). The segment covering 34–43 (NVNNNDQPWQ) has biased composition (polar residues). Residues 180–189 (NVNNKDQPWQ) are compositionally biased toward polar residues. Over residues 357–366 (DEDEEEEEDQ) the composition is skewed to acidic residues. Residues 376–385 (RGDDGNTRAD) are compositionally biased toward basic and acidic residues.

This sequence belongs to the coleoptericin family. In terms of tissue distribution, hemolymph (at protein level). Larval fat body.

It is found in the secreted. Its function is as follows. Acaloleptins A1-A4 show antibacterial activity against Gram-negative bacteria but not against Gram-positive bacteria. Acaloleptin A5 shows antibacterial activity against Gram-positive bacteria but not against Gram-negative bacteria, and may also have antifungal activity. This is Acaloleptin A from Acalolepta luxuriosa (Udo longhorn beetle).